Reading from the N-terminus, the 215-residue chain is Transmembrane protein 267 (215 aa).

The next 3 membrane-spanning stretches (helical) occupy residues 77–97 (FGEV…HFFQ), 114–134 (FLHC…AVHL), and 178–198 (SSFY…LMYL).

Its subcellular location is the membrane. The chain is Transmembrane protein 267 from Mus musculus (Mouse).